The sequence spans 219 residues: N-(5'-phosphoribosyl)anthranilate isomerase (219 aa).

Belongs to the TrpF family.

The enzyme catalyses N-(5-phospho-beta-D-ribosyl)anthranilate = 1-(2-carboxyphenylamino)-1-deoxy-D-ribulose 5-phosphate. It participates in amino-acid biosynthesis; L-tryptophan biosynthesis; L-tryptophan from chorismate: step 3/5. The chain is N-(5'-phosphoribosyl)anthranilate isomerase from Bradyrhizobium sp. (strain ORS 278).